The following is a 562-amino-acid chain: Phosphatidylinositol 4-phosphate 5-kinase type-1 alpha (562 aa).

Residues 81–449 form the PIPK domain; it reads TSSALKGAIQ…RFQRFMCNTV (369 aa). Lys103 is covalently cross-linked (Glycyl lysine isopeptide (Lys-Gly) (interchain with G-Cter in ubiquitin)). Ser486 carries the phosphoserine modification. Residues 506–526 form a disordered region; the sequence is HLGRPDVLPQTPPLEEISEGS.

As to quaternary structure, interacts with RAC1. Interacts with TUT1. Forms a complex with CDH1/E-cadherin, CTNNB1/beta-catenin and CTNND1 at the plasma membrane upon calcium stimulation. Found in a ternary complex with IRS1 and DGKZ in the absence of insulin stimulation. Interacts with DGKZ. Interacts with PIP4K2C; the interaction inhibits PIP5K1A kinase activity. As to expression, highly expressed in heart, placenta, skeletal muscle, kidney and pancreas. Detected at lower levels in brain, lung and liver.

It localises to the cell membrane. It is found in the cytoplasm. The protein resides in the nucleus. The protein localises to the nucleus speckle. Its subcellular location is the cell projection. It localises to the ruffle. It is found in the lamellipodium. The enzyme catalyses a 1,2-diacyl-sn-glycero-3-phospho-(1D-myo-inositol 4-phosphate) + ATP = a 1,2-diacyl-sn-glycero-3-phospho-(1D-myo-inositol-4,5-bisphosphate) + ADP + H(+). It catalyses the reaction 1-octadecanoyl-2-(5Z,8Z,11Z,14Z)-eicosatetraenoyl-sn-glycero-3-phospho-1D-myo-inositol 4-phosphate + ATP = 1-octadecanoyl-2-(5Z,8Z,11Z,14Z)-eicosatetraenoyl-sn-glycero-3-phospho-1D-myo-inositol 4,5-bisphosphate + ADP + H(+). The catalysed reaction is 1,2-dihexadecanoyl-sn-glycero-3-phospho-(1D-myo-inositol-4-phosphate) + ATP = 1,2-dihexadecanoyl-sn-glycero-3-phospho-(1D-myo-inositol-4,5-bisphosphate) + ADP + H(+). It carries out the reaction 1-octadecanoyl-2-(9Z)-octadecenoyl-sn-glycero-3-phospho-1D-myo-inositol 4-phosphate + ATP = 1-octadecanoyl-2-(9Z)-octadecenoyl-sn-glycero-3-phospho-1D-myo-inositol 4,5-bisphosphate + ADP + H(+). The enzyme catalyses 1-octadecanoyl-2-(9Z)-octadecenoyl-sn-glycero-3-phospho-1D-myo-inositol + ATP = 1-octadecanoyl-2-(9Z)-octadecenoyl-sn-glycero-3-phospho-1D-myo-inositol 5-phosphate + ADP + H(+). It catalyses the reaction 1-octadecanoyl-2-(9Z,12Z)-octadecadienoyl-sn-glycero-3-phospho-1D-myo-inositol + ATP = 1-octadecanoyl-2-(9Z,12Z)-octadecadienoyl-sn-glycero-3-phospho-1D-myo-inositol 5-phosphate + ADP + H(+). The catalysed reaction is 1-octadecanoyl-2-(5Z,8Z,11Z,14Z-eicosatetraenoyl)-sn-glycero-3-phospho-(1D-myo-inositol) + ATP = 1-octadecanoyl-2-(5Z,8Z,11Z,14Z)-eicosatetraenoyl-sn-glycero-3-phospho-1D-myo-inositol 5-phosphate + ADP + H(+). It carries out the reaction 1,2-di-(9Z,12Z)-octadecadienoyl-sn-glycero-3-phospho-1D-myo-inositol + ATP = 1,2-di(9Z,12Z)-octadecadienoyl-sn-glycero-3-phospho-1D-myo-inositol 5-phosphate + ADP + H(+). With respect to regulation, activated by diarachidonoyl phosphatidic acid (DAPA), when 1,2-dipalmitoyl-PI4P is used as a substrate. Catalyzes the phosphorylation of phosphatidylinositol 4-phosphate (PtdIns(4)P/PI4P) to form phosphatidylinositol 4,5-bisphosphate (PtdIns(4,5)P2/PIP2), a lipid second messenger that regulates several cellular processes such as signal transduction, vesicle trafficking, actin cytoskeleton dynamics, cell adhesion, and cell motility. PtdIns(4,5)P2 can directly act as a second messenger or can be utilized as a precursor to generate other second messengers: inositol 1,4,5-trisphosphate (IP3), diacylglycerol (DAG) or phosphatidylinositol-3,4,5-trisphosphate (PtdIns(3,4,5)P3/PIP3). PIP5K1A-mediated phosphorylation of PtdIns(4)P is the predominant pathway for PtdIns(4,5)P2 synthesis. Can also use phosphatidylinositol (PtdIns) as substrate in vitro. Together with PIP5K1C, is required for phagocytosis, both enzymes regulating different types of actin remodeling at sequential steps. Promotes particle ingestion by activating the WAS GTPase-binding protein that induces Arp2/3 dependent actin polymerization at the nascent phagocytic cup. Together with PIP5K1B, is required, after stimulation by G-protein coupled receptors, for the synthesis of IP3 that will induce stable platelet adhesion. Recruited to the plasma membrane by the E-cadherin/beta-catenin complex where it provides the substrate PtdIns(4,5)P2 for the production of PtdIns(3,4,5)P3, IP3 and DAG, that will mobilize internal calcium and drive keratinocyte differentiation. Positively regulates insulin-induced translocation of SLC2A4 to the cell membrane in adipocytes. Together with PIP5K1C has a role during embryogenesis. Independently of its catalytic activity, is required for membrane ruffling formation, actin organization and focal adhesion formation during directional cell migration by controlling integrin-induced translocation of the small GTPase RAC1 to the plasma membrane. Also functions in the nucleus where it acts as an activator of TUT1 adenylyltransferase activity in nuclear speckles, thereby regulating mRNA polyadenylation of a select set of mRNAs. The sequence is that of Phosphatidylinositol 4-phosphate 5-kinase type-1 alpha from Homo sapiens (Human).